The sequence spans 1613 residues: Vitellogenin-2 (1613 aa).

The signal sequence occupies residues 1–15 (MRSIIIASLVALALA). A Vitellogenin domain is found at 24–687 (FEPKTDYHYK…EKNSFLPKDL (664 aa)). Asn1268 carries N-linked (GlcNAc...) asparagine glycosylation. The region spanning 1308-1477 (SVCKVQKNQI…SYLLKNEECE (170 aa)) is the VWFD domain. Cystine bridges form between Cys1310–Cys1440 and Cys1332–Cys1476. Positions 1491–1531 (KYERDEEQSDEYSSEETYDYEQENTKKSQKNQRSQKKSDLV) are disordered. The span at 1495 to 1512 (DEEQSDEYSSEETYDYEQ) shows a compositional bias: acidic residues.

In terms of tissue distribution, expressed in the intestine of adult hermaphrodites.

It is found in the secreted. Functionally, precursor of the egg-yolk proteins that are sources of nutrients during embryonic development. Together with other vitellogenins, may play a role in modulating life-span, acting via induction of autophagy and lysosomal lipolysis. This chain is Vitellogenin-2 (vit-2), found in Caenorhabditis elegans.